The sequence spans 406 residues: Homocysteine-responsive endoplasmic reticulum-resident ubiquitin-like domain member 2 protein (406 aa).

The Ubiquitin-like domain occupies 10-89 (VTLIIKAPNQ…HMVHLVCTSR (80 aa)). The segment at 86 to 154 (CTSRTPPSSP…TLPQAQTDQA (69 aa)) is disordered. 2 stretches are compositionally biased toward low complexity: residues 87 to 98 (TSRTPPSSPKSS) and 106 to 126 (ALASSSNSSSDHSGSTTPSSG). Residues 127-154 (QETLSLAVGSSSEGLRQRTLPQAQTDQA) are compositionally biased toward polar residues. A helical transmembrane segment spans residues 302–322 (FIMVMGAMLLVYLHQAGWFPF).

Its subcellular location is the membrane. Functionally, could be involved in the unfolded protein response (UPR) pathway. The polypeptide is Homocysteine-responsive endoplasmic reticulum-resident ubiquitin-like domain member 2 protein (HERPUD2) (Homo sapiens (Human)).